The primary structure comprises 70 residues: U2-agatoxin-Ao1q (70 aa).

The N-terminal stretch at Met1–Ala20 is a signal peptide. Residues Val21–Arg34 constitute a propeptide that is removed on maturation. Disulfide bonds link Cys44–Cys58 and Cys52–Cys68. Leu69 is subject to Leucine amide.

The protein belongs to the neurotoxin 01 (U2-agtx) family. Does not contain a cysteine at position 53 which disrupts the cysteine framework. As to expression, expressed by the venom gland.

It is found in the secreted. Its function is as follows. Insect active toxin causing rapid but reversible paralysis in crickets. No activity shown in mammals. Does not show effect on mammalian voltage-gated calcium channels. This Agelena orientalis (Funnel-web spider) protein is U2-agatoxin-Ao1q.